Here is a 146-residue protein sequence, read N- to C-terminus: Angiogenin (146 aa).

Residues 1–24 (MVMGLHLLLLVFILGLGLTPPTLA) form the signal peptide. Position 25 is a pyrrolidone carboxylic acid (Q25). The active-site Proton acceptor is the H37. 3 cysteine pairs are disulfide-bonded: C50–C105, C63–C116, and C81–C131. The short motif at 55–59 (RLRNM) is the Nucleolar localization signal element. C105 lines the tRNA pocket. The Proton donor role is filled by H138.

It belongs to the pancreatic ribonuclease family. In terms of assembly, homodimer. Interacts with RNH1; inhibiting ANG ribonuclease activity. Interacts with PCNA.

The protein resides in the secreted. It localises to the nucleus. Its subcellular location is the nucleolus. It is found in the cytoplasm. The protein localises to the stress granule. Has weak tRNA ribonuclease activity by itself due to partial autoinhibition by its C-terminus, which folds into a short alpha-helix that partially occludes the substrate-binding site. In absence of stress, the ribonuclease activity is inhibited by RNH1 in the cytoplasm. In response to stress, dissociates from RNH1 in the cytoplasm and associates with cytoplasmic ribosomes with vacant A-sites: ribosomes directly activate the tRNA ribonuclease activity of ANG by refolding the C-terminal alpha-helix. In response to stress, the angiogenic activity of ANG is inhibited by RNH1 in the nucleus. Its function is as follows. Secreted ribonuclease that can either promote or restrict cell proliferation of target cells, depending on the context. Endocytosed in target cells via its receptor PLXNB2 and translocates to the cytoplasm or nucleus. Under stress conditions, localizes to the cytoplasm and promotes the assembly of stress granules (SGs): specifically cleaves a subset of tRNAs within anticodon loops to produce tRNA-derived stress-induced fragments (tiRNAs), resulting in translation repression and inhibition of cell proliferation. tiRNas also prevent formation of apoptosome, thereby promoting cell survival. Preferentially cleaves RNAs between a pyrimidine and an adenosine residue, suggesting that it cleaves the anticodon loop of tRNA(Ala) (32-UUAGCAU-38) after positions 33 and 36. Cleaves a subset of tRNAs, including tRNA(Ala), tRNA(Glu), tRNA(Gly), tRNA(Lys), tRNA(Val), tRNA(His), tRNA(Asp) and tRNA(Sec). Under growth conditions and in differentiated cells, translocates to the nucleus and stimulates ribosomal RNA (rRNA) transcription, including that containing the initiation site sequences of 45S rRNA, thereby promoting cell growth and proliferation. Angiogenin induces vascularization of normal and malignant tissues via its ability to promote rRNA transcription. Involved in hematopoietic stem and progenitor cell (HSPC) growth and survival by promoting rRNA transcription in growth conditions and inhibiting translation in response to stress, respectively. Mediates the crosstalk between myeloid and intestinal epithelial cells to protect the intestinal epithelial barrier integrity: secreted by myeloid cells and promotes intestinal epithelial cells proliferation and survival. Also mediates osteoclast-endothelial cell crosstalk in growing bone: produced by osteoclasts and protects the neighboring vascular cells against senescence by promoting rRNA transcription. In Aotus trivirgatus (Three-striped night monkey), this protein is Angiogenin (ANG).